Here is a 131-residue protein sequence, read N- to C-terminus: Small ribosomal subunit protein uS8 (131 aa).

The protein belongs to the universal ribosomal protein uS8 family. In terms of assembly, part of the 30S ribosomal subunit. Contacts proteins S5 and S12.

One of the primary rRNA binding proteins, it binds directly to 16S rRNA central domain where it helps coordinate assembly of the platform of the 30S subunit. In Blochmanniella pennsylvanica (strain BPEN), this protein is Small ribosomal subunit protein uS8.